The chain runs to 220 residues: Glutathione S-transferase-like protein FUS3 (220 aa).

One can recognise a GST N-terminal domain in the interval 3–84 (SFGTLYTYMP…YVAQSGPQAS (82 aa)). The region spanning 90–220 (DAMSSAKIRQ…LIEKRRIGAK (131 aa)) is the GST C-terminal domain.

This sequence belongs to the GST superfamily.

Its function is as follows. Glutathione S-transferase-like protein; part of the gene cluster that mediates the biosynthesis of the mycotoxin fusarin C. Within the cluster, FUS1, FUS2, FUS8 and FUS9 are sufficient for fusarin production. The other FUS cluster members are not essential for fusarin C biosynthesis. This is Glutathione S-transferase-like protein FUS3 from Gibberella moniliformis (strain M3125 / FGSC 7600) (Maize ear and stalk rot fungus).